We begin with the raw amino-acid sequence, 827 residues long: Glycerol-3-phosphate acyltransferase (827 aa).

The HXXXXD motif signature appears at 309–314; it reads CHRSHI.

It belongs to the GPAT/DAPAT family.

It localises to the cell inner membrane. It carries out the reaction sn-glycerol 3-phosphate + an acyl-CoA = a 1-acyl-sn-glycero-3-phosphate + CoA. It functions in the pathway phospholipid metabolism; CDP-diacylglycerol biosynthesis; CDP-diacylglycerol from sn-glycerol 3-phosphate: step 1/3. This chain is Glycerol-3-phosphate acyltransferase, found in Ectopseudomonas mendocina (strain ymp) (Pseudomonas mendocina).